A 428-amino-acid chain; its full sequence is Dihydroorotase (428 aa).

Residues His59 and His61 each contribute to the Zn(2+) site. Substrate is bound by residues 61–63 (HFR) and Asn93. Zn(2+) contacts are provided by Asp151, His178, and His231. Asn277 contributes to the substrate binding site. Asp304 is a binding site for Zn(2+). Residue Asp304 is part of the active site. Residues His308 and 322–323 (FG) each bind substrate.

The protein belongs to the metallo-dependent hydrolases superfamily. DHOase family. Class I DHOase subfamily. As to quaternary structure, homodimer. Requires Zn(2+) as cofactor.

The enzyme catalyses (S)-dihydroorotate + H2O = N-carbamoyl-L-aspartate + H(+). Its pathway is pyrimidine metabolism; UMP biosynthesis via de novo pathway; (S)-dihydroorotate from bicarbonate: step 3/3. Catalyzes the reversible cyclization of carbamoyl aspartate to dihydroorotate. This chain is Dihydroorotase, found in Bacillus subtilis (strain 168).